The chain runs to 375 residues: Metal tolerance protein B (375 aa).

Over 1 to 57 (MELEQICILKPDDEEEMESPSPSKTEENLGVVPLSCAFTRQEHCVSETKEREESTRR) the chain is Cytoplasmic. The helical transmembrane segment at 58–78 (LSSLIFLYLIVMSVQIVGGFK) threads the bilayer. The Vacuolar segment spans residues 79–84 (ANSLAV). The helical transmembrane segment at 85–105 (MTDAAHLLSDVAGLCVSLLAI) threads the bilayer. Topologically, residues 106-122 (KVSSWEANPRNSFGFKR) are cytoplasmic. Residues 123–143 (LEVLAAFLSVQLIWLVSGVII) form a helical membrane-spanning segment. Residues 144–160 (HEAIQRLLSRSREVNGE) lie on the Vacuolar side of the membrane. A helical membrane pass occupies residues 161–181 (IMFGISAFGFFMNLVMVLWLG). Positions 182-206 (HNHSHHHHDHHHHHHNHKHQHQHHH) are required for zinc-binding. Topologically, residues 182-240 (HNHSHHHHDHHHHHHNHKHQHQHHHKEVVAEEEEEEMNPLKGEKSSSKEMNINIQGAYL) are cytoplasmic. A helical transmembrane segment spans residues 241–261 (HAMADMIQSLGVMIGGGIIWV). Residues 262 to 264 (KPK) lie on the Vacuolar side of the membrane. Residues 265-285 (WVLVDLICTLVFSAFALAATL) form a helical membrane-spanning segment. The Cytoplasmic portion of the chain corresponds to 286–375 (PILKNIFGIL…YHATVQVESE (90 aa)).

This sequence belongs to the cation diffusion facilitator (CDF) transporter (TC 2.A.4) family. SLC30A subfamily.

Its subcellular location is the vacuole membrane. Its function is as follows. Involved in sequestration of excess zinc in the cytoplasm into vacuoles to maintain zinc homeostasis. In Arabidopsis thaliana (Mouse-ear cress), this protein is Metal tolerance protein B (MTPB).